Here is a 148-residue protein sequence, read N- to C-terminus: Cytochrome c-type biogenesis protein CcmE (148 aa).

The Cytoplasmic portion of the chain corresponds to 1–7 (MKPRNRR). A helical; Signal-anchor for type II membrane protein transmembrane segment spans residues 8–28 (IALIVAGLSALGIATALVLNA). Residues 29 to 148 (FQSNLVFFFT…VQKKPASRKP (120 aa)) are Periplasmic-facing. Residues histidine 123 and tyrosine 127 each contribute to the heme site. Residues 128–148 (MPPEAQHALDEVQKKPASRKP) are disordered.

The protein belongs to the CcmE/CycJ family.

Its subcellular location is the cell inner membrane. In terms of biological role, heme chaperone required for the biogenesis of c-type cytochromes. Transiently binds heme delivered by CcmC and transfers the heme to apo-cytochromes in a process facilitated by CcmF and CcmH. The chain is Cytochrome c-type biogenesis protein CcmE from Pseudomonas aeruginosa.